An 871-amino-acid chain; its full sequence is DNA mismatch repair protein MutS (871 aa).

Residue 605-612 coordinates ATP; sequence GPNMGGKS. The disordered stretch occupies residues 791 to 840; that stretch reads PQRPTSASVEQPVDSAKTETAATAEEPQQLSLFPTDEETKPKQPTKKERS. A compositionally biased stretch (basic and acidic residues) spans 827 to 840; sequence EETKPKQPTKKERS.

Belongs to the DNA mismatch repair MutS family.

This protein is involved in the repair of mismatches in DNA. It is possible that it carries out the mismatch recognition step. This protein has a weak ATPase activity. This chain is DNA mismatch repair protein MutS, found in Shouchella clausii (strain KSM-K16) (Alkalihalobacillus clausii).